Reading from the N-terminus, the 151-residue chain is Pyruvoyl-dependent arginine decarboxylase (151 aa).

Position 42 is a pyruvic acid (Ser) (S42).

Belongs to the PdaD family. Pyruvate serves as cofactor.

It catalyses the reaction L-arginine + H(+) = agmatine + CO2. In Methanothermobacter thermautotrophicus (strain ATCC 29096 / DSM 1053 / JCM 10044 / NBRC 100330 / Delta H) (Methanobacterium thermoautotrophicum), this protein is Pyruvoyl-dependent arginine decarboxylase.